Here is a 331-residue protein sequence, read N- to C-terminus: Flagellar P-ring protein (331 aa).

Positions 1 to 25 (MKKRLAVLLVIVLTITFSFSVTTRI) are cleaved as a signal peptide.

This sequence belongs to the FlgI family. As to quaternary structure, the basal body constitutes a major portion of the flagellar organelle and consists of four rings (L,P,S, and M) mounted on a central rod.

It is found in the periplasm. The protein localises to the bacterial flagellum basal body. Functionally, assembles around the rod to form the L-ring and probably protects the motor/basal body from shearing forces during rotation. This chain is Flagellar P-ring protein, found in Thermotoga petrophila (strain ATCC BAA-488 / DSM 13995 / JCM 10881 / RKU-1).